Here is a 386-residue protein sequence, read N- to C-terminus: Succinate--CoA ligase [ADP-forming] subunit beta (386 aa).

The ATP-grasp domain maps to 9–244 (KELLKQFGVP…LDEEDPAEIE (236 aa)). Residues K46, 53 to 55 (GRG), E99, A102, and E107 each bind ATP. Mg(2+) contacts are provided by N199 and D213. Substrate contacts are provided by residues N264 and 321 to 323 (GIM).

Belongs to the succinate/malate CoA ligase beta subunit family. In terms of assembly, heterotetramer of two alpha and two beta subunits. Mg(2+) serves as cofactor.

The enzyme catalyses succinate + ATP + CoA = succinyl-CoA + ADP + phosphate. It catalyses the reaction GTP + succinate + CoA = succinyl-CoA + GDP + phosphate. It participates in carbohydrate metabolism; tricarboxylic acid cycle; succinate from succinyl-CoA (ligase route): step 1/1. Its function is as follows. Succinyl-CoA synthetase functions in the citric acid cycle (TCA), coupling the hydrolysis of succinyl-CoA to the synthesis of either ATP or GTP and thus represents the only step of substrate-level phosphorylation in the TCA. The beta subunit provides nucleotide specificity of the enzyme and binds the substrate succinate, while the binding sites for coenzyme A and phosphate are found in the alpha subunit. The protein is Succinate--CoA ligase [ADP-forming] subunit beta of Bordetella petrii (strain ATCC BAA-461 / DSM 12804 / CCUG 43448).